Reading from the N-terminus, the 1089-residue chain is MCDVLMQPVRTPRPSTNLRSKPLRPTGDGGVFPRLGRLIVRRPWVVIAFWVALAGLLAPTVPSLDAISQRHPVAILPSDAPVLVSTRQMTAAFREAGLQSVAVVVLSDAKGLGAADERSYKELVDALRRDTRDVVMLQDFVTTPPLRELMTSKDNQAWILPVGLPGDLGSTQSKQAYARVADIVEHQVAGSTLTANLTGPAATVADLNLTGQRDRSRIEFAITILLLVILLIIYRNPITMVLPLITIGMSVVVAQRLVAIAGLAGLGIANQSIIFMSGMMVGAGTDYAVFLISRYHDYLRQGADSDQAVKKALTSIGKVIAASAATVAITFLGMVFTQLGILKTVGPMLGISVAVVFFAAVTLLPALMVLTGRRGWIAPRRDLTRRFWRSSGVHIVRRPKTHLLASALVLVILAGCAGLARYNYDDRKTLPASVESSIGYAALDKHFPSNLIIPEYLFIQSSTDLRTPKALADLEQMVQRVSQVPGVAMVRGITRPAGRSLEQARTSWQAGEVGSKLDEGSKQIAAHTGDIDKLAGGANLMASKLGDVRAQVNRAISTVGGLIDALAYLQDLLGGNRVLGELEGAEKLIGSMRALGDTIDADASFVANNTEWASPVLGALDSSPMCTADPACASARTELQRLVTARDDGTLAKISELARQLQATRAVQTLAATVSGLRGALATVIRAMGSLGMSSPGGVRSKINLVNKGVNDLADGSRQLAEGVQLLVDQVKKMGFGLGEASAFLLAMKDTATTPAMAGFYIPPELLSYATGESVKAETMPSEYRDLLGGLNVDQLKKVAAAFISPDGHSIRYLIQTDLNPFSTAAMDQIDAITAAARGAQPNTALADAKVSVVGLPVVLKDTRDYSDHDLRLIIAMTVCIVLLILIVLLRAIVAPLYLIGSVIVSYLAALGIGVIVFQFLLGQEMHWSIPGLTFVILVAVGADYNMLLISRLREEAVLGVRSGVIRTVASTGGVITAAGLIMAASMYGLVFASLGSVVQGAFVLGTGLLLDTFLVRTVTVPAIAVLVGQANWWLPSSWRPATWWPLGRRRGRAQRTKRKPLLPKEEEEQSPPDDDDLIGLWLHDGLRL.

Residues 1 to 26 are disordered; sequence MCDVLMQPVRTPRPSTNLRSKPLRPT. 12 consecutive transmembrane segments (helical) span residues 44–64, 222–242, 257–277, 316–336, 349–369, 400–420, 555–575, 874–894, 898–918, 930–950, 973–993, and 996–1016; these read WVVI…VPSL, ITIL…TMVL, LVAI…IFMS, IGKV…GMVF, LGIS…ALMV, KTHL…AGLA, AIST…LLGG, IIAM…RAIV, YLIG…VIVF, IPGL…MLLI, GGVI…LVFA, and GSVV…TFLV. The interval 1056-1078 is disordered; sequence RTKRKPLLPKEEEEQSPPDDDDL. Residues 1066-1078 show a composition bias toward acidic residues; that stretch reads EEEEQSPPDDDDL.

The protein belongs to the resistance-nodulation-cell division (RND) (TC 2.A.6) family. MmpL subfamily.

Its subcellular location is the cell membrane. The chain is Probable transport protein MmpL8 (mmpL8) from Mycobacterium bovis (strain ATCC BAA-935 / AF2122/97).